Consider the following 700-residue polypeptide: Constitutive coactivator of peroxisome proliferator-activated receptor gamma (700 aa).

The protein belongs to the constitutive coactivator of PPAR-gamma family. Interacts with ESR1 and RXRA. Interacts with PPARG; in a ligand-independent manner.

It localises to the nucleus. Functionally, functions as a transactivator of PPARG and ESR1. Functions in adipogenesis through PPARG activation. This Bos taurus (Bovine) protein is Constitutive coactivator of peroxisome proliferator-activated receptor gamma (FAM120B).